A 397-amino-acid chain; its full sequence is MRQILVLLLFVTLVYGLIRVPLKRQKSIRKTPKEKGKLSHVWTQQGIDMVQYTDSCNNDQAPSEPLINYMDVQYFGEISIGTPPQNFTVIFDTGSSNLWVPSVYCISPACAQHNRFQPQLSSTYESNGNNFSLQYGTGSLSGVIGIDSVTVEGILVQNQQFGESVSEPGSTFVDASFDGILGLGYPSIAVGGCTPVFDNMIAQNLVELPMFSVYMSRDPNSPVGGELVFGGFDASRFSGQLNWVPVTNQGYWQIQLDNIQINGEVVFCSGGCQAIVDTGTSMITGPSSDIVQLQSIIGASAANGDYEVDCTVLNKMPTMTFTINGIGYQMTPQQYTLQDDDGVCSSGFQGLDISPPAGPLWILGDVFIGQYYSVFDRGNNRVGLAPVVPYPPLMNGV.

Positions 1–16 are cleaved as a signal peptide; that stretch reads MRQILVLLLFVTLVYG. A propeptide spans 17 to 49 (activation peptide); the sequence is LIRVPLKRQKSIRKTPKEKGKLSHVWTQQGIDM. Residues 74 to 385 enclose the Peptidase A1 domain; the sequence is YFGEISIGTP…DRGNNRVGLA (312 aa). Asn86 carries an N-linked (GlcNAc...) asparagine glycan. Asp92 is a catalytic residue. The cysteines at positions 105 and 110 are disulfide-linked. Asn130 is a glycosylation site (N-linked (GlcNAc...) asparagine). A disulfide bridge links Cys268 with Cys272. Asp277 is a catalytic residue. Residues Cys310 and Cys344 are joined by a disulfide bond.

It belongs to the peptidase A1 family. Homodimer; disulfide-linked. Post-translationally, glycosylated. Contains high mannose-type oligosaccharide. Expressed predominantly in the anterior and posterior adult stomach and at much lower levels in the larval foregut.

It localises to the endosome. It catalyses the reaction Similar to cathepsin D, but slightly broader specificity.. May have a role in immune function. Probably involved in the processing of antigenic peptides during MHC class II-mediated antigen presentation. The chain is Cathepsin E-B (ctse-b) from Xenopus laevis (African clawed frog).